Here is a 277-residue protein sequence, read N- to C-terminus: Putative phosphoenolpyruvate synthase regulatory protein (277 aa).

An ADP-binding site is contributed by 157 to 164 (GVSRCGKT).

Belongs to the pyruvate, phosphate/water dikinase regulatory protein family. PSRP subfamily.

The enzyme catalyses [pyruvate, water dikinase] + ADP = [pyruvate, water dikinase]-phosphate + AMP + H(+). It catalyses the reaction [pyruvate, water dikinase]-phosphate + phosphate + H(+) = [pyruvate, water dikinase] + diphosphate. Functionally, bifunctional serine/threonine kinase and phosphorylase involved in the regulation of the phosphoenolpyruvate synthase (PEPS) by catalyzing its phosphorylation/dephosphorylation. The polypeptide is Putative phosphoenolpyruvate synthase regulatory protein (Enterobacter sp. (strain 638)).